A 62-amino-acid chain; its full sequence is Phospholipase A2 superbin a (62 aa).

Ca(2+)-binding residues include Y28, G30, and G32. C29 and C45 are oxidised to a cystine. Residue H48 is part of the active site. D49 serves as a coordination point for Ca(2+).

Requires Ca(2+) as cofactor. In terms of tissue distribution, expressed by the venom gland.

The protein resides in the secreted. The enzyme catalyses a 1,2-diacyl-sn-glycero-3-phosphocholine + H2O = a 1-acyl-sn-glycero-3-phosphocholine + a fatty acid + H(+). Snake venom phospholipase A2 (PLA2) that inhibits collagen-induced platelet aggregation. In terms of inhibition of platelet aggregation, superbin a is more potent as superbin b, c, and d. PLA2 catalyzes the calcium-dependent hydrolysis of the 2-acyl groups in 3-sn-phosphoglycerides. This chain is Phospholipase A2 superbin a, found in Austrelaps superbus (Lowland copperhead snake).